The sequence spans 292 residues: Inhibitory synaptic factor 1 (292 aa).

Disordered stretches follow at residues methionine 1 to isoleucine 25, serine 122 to arginine 186, and cysteine 198 to asparagine 292. A coiled-coil region spans residues glutamate 23–aspartate 63. The segment covering cysteine 198 to glycine 214 has biased composition (acidic residues). Positions arginine 263–arginine 285 are enriched in polar residues.

Belongs to the INSYN1 family. In terms of assembly, interacts with GPHN.

It localises to the postsynaptic density. Component of the protein machinery at the inhibitory synapses, probably acting as a scaffold. Inhibitory synapses dampen neuronal activity through postsynaptic hyperpolarization. This synaptic inhibition is fundamental for the functioning of the central nervous system, shaping and orchestrating the flow of information through neuronal networks to generate a precise neural code. This Bos taurus (Bovine) protein is Inhibitory synaptic factor 1.